We begin with the raw amino-acid sequence, 40 residues long: Protamine-2 (40 aa).

Positions 1 to 40 are disordered; the sequence is MPPRRKRVSSAPRRRRRTYRRTTAHKHQERPVHRRRRRRH.

As to expression, testis.

Its subcellular location is the nucleus. It is found in the chromosome. Protamines substitute for histones in the chromatin of sperm during the haploid phase of spermatogenesis. They compact sperm DNA into a highly condensed, stable and inactive complex. In Bufo japonicus (Japanese common toad), this protein is Protamine-2 (PBP2).